The following is a 157-amino-acid chain: Transcription elongation factor GreA (157 aa).

It belongs to the GreA/GreB family.

Functionally, necessary for efficient RNA polymerase transcription elongation past template-encoded arresting sites. The arresting sites in DNA have the property of trapping a certain fraction of elongating RNA polymerases that pass through, resulting in locked ternary complexes. Cleavage of the nascent transcript by cleavage factors such as GreA or GreB allows the resumption of elongation from the new 3'terminus. GreA releases sequences of 2 to 3 nucleotides. The chain is Transcription elongation factor GreA from Mesorhizobium japonicum (strain LMG 29417 / CECT 9101 / MAFF 303099) (Mesorhizobium loti (strain MAFF 303099)).